Consider the following 805-residue polypeptide: Angiotensin-converting enzyme 2 (805 aa).

An N-terminal signal peptide occupies residues 1–17 (MSSSCWLLLSLVAVATA). Residues 18–740 (QSLIEEKAES…LKPPYEPPVT (723 aa)) lie on the Extracellular side of the membrane. Residues 19 to 607 (SLIEEKAESF…QNRNSTVGWS (589 aa)) form the Peptidase M2 domain. 3 N-linked (GlcNAc...) asparagine glycosylation sites follow: N53, N82, and N90. C133 and C141 are disulfide-bonded. A chloride-binding site is contributed by R169. R273 provides a ligand contact to substrate. The N-linked (GlcNAc...) asparagine glycan is linked to N299. A disulfide bridge connects residues C344 and C361. 345-346 (HP) contributes to the substrate binding site. H374 contacts Zn(2+). E375 acts as the Proton acceptor in catalysis. Residues H378 and E402 each contribute to the Zn(2+) site. N-linked (GlcNAc...) asparagine glycosylation occurs at N432. 2 residues coordinate chloride: W477 and K481. The Proton donor role is filled by H505. Position 515 (Y515) interacts with substrate. The cysteines at positions 530 and 542 are disulfide-linked. 2 N-linked (GlcNAc...) asparagine glycosylation sites follow: N546 and N601. Residues 614-805 (ADQSIKVRIS…QNSDDAQTSF (192 aa)) enclose the Collectrin-like domain. Positions 652 to 659 (REYFSREK) are essential for cleavage by ADAM17. 2 N-linked (GlcNAc...) asparagine glycosylation sites follow: N660 and N690. The interval 697–716 (RSEVEEAIRMSRGRINDIFG) is essential for cleavage by TMPRSS11D and TMPRSS2. A helical membrane pass occupies residues 741 to 761 (IWLIIFGVVMGTVVVGIVILI). Residues 762-805 (VTGIKGRKKKNETKREENPYDSMDIGKGESNAGFQNSDDAQTSF) lie on the Cytoplasmic side of the membrane. A disordered region spans residues 771 to 805 (KNETKREENPYDSMDIGKGESNAGFQNSDDAQTSF). Residues 778 to 786 (ENPYDSMDI) carry the LIR motif. Y781 is subject to Phosphotyrosine. The Endocytic sorting signal motif lies at 781–784 (YDSM). Residues 781 to 785 (YDSMD) carry the SH2-binding motif. Phosphoserine is present on S783. A Glycyl lysine isopeptide (Lys-Gly) (interchain with G-Cter in ubiquitin) cross-link involves residue K788. The short motif at 792–795 (NAGF) is the PTB element. A compositionally biased stretch (polar residues) spans 793–805 (AGFQNSDDAQTSF). Positions 803-805 (TSF) match the PDZ-binding motif.

It belongs to the peptidase M2 family. As to quaternary structure, homodimer. Interacts with the catalytically active form of TMPRSS2. Interacts with SLC6A19; this interaction is essential for expression and function of SLC6A19 in intestine. Interacts with ITGA5:ITGB1. Probably interacts (via endocytic sorting signal motif) with AP2M1; the interaction is inhibited by phosphorylation of Tyr-781. Interacts (via PDZ-binding motif) with NHERF1 (via PDZ domains); the interaction may enhance ACE2 membrane residence. Zn(2+) serves as cofactor. Chloride is required as a cofactor. In terms of processing, glycosylated. Proteolytic cleavage by ADAM17 generates a secreted form. Also cleaved by serine proteases: TMPRSS2, TMPRSS11D and HPN/TMPRSS1. Post-translationally, phosphorylated. Phosphorylation at Tyr-781 probably inhibits interaction with AP2M1 and enables interactions with proteins containing SH2 domains. In terms of processing, ubiquitinated. Ubiquitinated on Lys-788 via 'Lys-48'-linked ubiquitin. 'Lys-48'-linked deubiquitinated by USP50 on the Lys-788; leading to its stabilization. In terms of tissue distribution, expressed in heart, kidney and forebrain. In testis, expression is restricted to Leydig cells. In heart, expressed in endothelial cells from small and large arteries, arterial smooth muscle cells, and myocytes (at protein level). Ubiquitously expressed, with highest levels in ileum, bladder and lung.

The protein localises to the secreted. It is found in the cell membrane. The protein resides in the cytoplasm. It localises to the cell projection. Its subcellular location is the cilium. The protein localises to the apical cell membrane. The enzyme catalyses angiotensin II + H2O = angiotensin-(1-7) + L-phenylalanine. It carries out the reaction angiotensin I + H2O = angiotensin-(1-9) + L-leucine. It catalyses the reaction bradykinin(1-8) + H2O = bradykinin(1-7) + L-phenylalanine. The catalysed reaction is neurotensin + H2O = neurotensin-(1-12) + L-leucine. The enzyme catalyses kinetensin + H2O = kinetensin-(1-8) + L-leucine. It carries out the reaction dynorphin A-(1-13) + H2O = dynorphin A-(1-12) + L-lysine. It catalyses the reaction apelin-13 + H2O = apelin-12 + L-phenylalanine. The catalysed reaction is [Pyr1]apelin-13 + H2O = [Pyr1]apelin-12 + L-phenylalanine. The enzyme catalyses apelin-17 + H2O = apelin-16 + L-phenylalanine. With respect to regulation, activated by chloride and fluoride, but not bromide. Inhibited by MLN-4760, cFP_Leu, and EDTA, but not by the ACE inhibitors linosipril, captopril, enalaprilat. Functionally, essential counter-regulatory carboxypeptidase of the renin-angiotensin hormone system that is a critical regulator of blood volume, systemic vascular resistance, and thus cardiovascular homeostasis. Converts angiotensin I to angiotensin 1-9, a nine-amino acid peptide with anti-hypertrophic effects in cardiomyocytes, and angiotensin II to angiotensin 1-7, which then acts as a beneficial vasodilator and anti-proliferation agent, counterbalancing the actions of the vasoconstrictor angiotensin II. Also removes the C-terminal residue from three other vasoactive peptides, neurotensin, kinetensin, and des-Arg bradykinin, but is not active on bradykinin. Also cleaves other biological peptides, such as apelins, casomorphins and dynorphin A. Plays an important role in amino acid transport by acting as binding partner of amino acid transporter SLC6A19 in intestine, regulating trafficking, expression on the cell surface, and its catalytic activity. This chain is Angiotensin-converting enzyme 2 (Ace2), found in Rattus norvegicus (Rat).